A 216-amino-acid chain; its full sequence is Cytochrome c biogenesis ATP-binding export protein CcmA (216 aa).

Residues 2–215 form the ABC transporter domain; the sequence is LSVEELSCVR…SNHLRKIKLG (214 aa). Residue 34–41 coordinates ATP; it reads GHNGAGKT.

Belongs to the ABC transporter superfamily. CcmA exporter (TC 3.A.1.107) family. As to quaternary structure, the complex is composed of two ATP-binding proteins (CcmA) and two transmembrane proteins (CcmB).

It is found in the cell inner membrane. It catalyses the reaction heme b(in) + ATP + H2O = heme b(out) + ADP + phosphate + H(+). Functionally, part of the ABC transporter complex CcmAB involved in the biogenesis of c-type cytochromes; once thought to export heme, this seems not to be the case, but its exact role is uncertain. Responsible for energy coupling to the transport system. In Photobacterium profundum (strain SS9), this protein is Cytochrome c biogenesis ATP-binding export protein CcmA.